The following is a 231-amino-acid chain: NADH-ubiquinone oxidoreductase chain 4 (231 aa).

The next 7 membrane-spanning stretches (helical) occupy residues 1-21, 34-54, 62-82, 86-106, 118-138, 169-189, and 211-231; these read PIAG…YGMI, MFIP…LTCL, LIAY…SIQT, LSGA…LFCL, ILIL…WWLL, TIIL…HIFL, and LLMT…ELVM.

This sequence belongs to the complex I subunit 4 family.

It is found in the mitochondrion membrane. It catalyses the reaction a ubiquinone + NADH + 5 H(+)(in) = a ubiquinol + NAD(+) + 4 H(+)(out). Core subunit of the mitochondrial membrane respiratory chain NADH dehydrogenase (Complex I) that is believed to belong to the minimal assembly required for catalysis. Complex I functions in the transfer of electrons from NADH to the respiratory chain. The immediate electron acceptor for the enzyme is believed to be ubiquinone. The protein is NADH-ubiquinone oxidoreductase chain 4 (MT-ND4) of Causus rhombeatus (Rhombic night adder).